Consider the following 100-residue polypeptide: Large ribosomal subunit protein uL23 (100 aa).

The protein belongs to the universal ribosomal protein uL23 family. In terms of assembly, part of the 50S ribosomal subunit. Contacts protein L29, and trigger factor when it is bound to the ribosome.

In terms of biological role, one of the early assembly proteins it binds 23S rRNA. One of the proteins that surrounds the polypeptide exit tunnel on the outside of the ribosome. Forms the main docking site for trigger factor binding to the ribosome. In Photorhabdus laumondii subsp. laumondii (strain DSM 15139 / CIP 105565 / TT01) (Photorhabdus luminescens subsp. laumondii), this protein is Large ribosomal subunit protein uL23.